The primary structure comprises 205 residues: Ras-related protein Rab-1A (205 aa).

An N-acetylserine modification is found at serine 2. Residues serine 20, glycine 21, glycine 23, lysine 24, serine 25, cysteine 26, glutamate 38, and threonine 43 each contribute to the GTP site. A Mg(2+)-binding site is contributed by serine 25. The Switch 1 signature appears at aspartate 34–phenylalanine 48. Threonine 43 provides a ligand contact to Mg(2+). Residues lysine 49 and lysine 61 each participate in a glycyl lysine isopeptide (Lys-Gly) (interchain with G-Cter in ubiquitin) cross-link. A Mg(2+)-binding site is contributed by aspartate 66. Positions aspartate 66 to glycine 83 match the Switch 2 motif. Residues glycine 69, asparagine 124, lysine 125, aspartate 127, alanine 155, and lysine 156 each coordinate GTP. The tract at residues proline 178–cysteine 205 is disordered. Serine 194 is modified (phosphoserine; by CDK1). 2 S-geranylgeranyl cysteine lipidation sites follow: cysteine 204 and cysteine 205.

The protein belongs to the small GTPase superfamily. Rab family. As to quaternary structure, may interact with YIPF5. Interacts with C9orf72; the interaction mediates recruitment of RAB1A to the ATG1/ULK1 kinase complex. Interacts with GDI1; this promotes dissociation from membranes. Requires Mg(2+) as cofactor. Post-translationally, phosphorylated by CDK1 kinase during mitosis. In terms of processing, ubiquitinated via 'Lys-11'-linked ubiquitination on Lys-49 and Lys-61; impairing the recruitment of guanosine diphosphate (GDP) dissociation inhibitor 1/GDI1.

It is found in the golgi apparatus. It localises to the endoplasmic reticulum. Its subcellular location is the early endosome. The protein resides in the cytoplasm. The protein localises to the cytosol. It is found in the membrane. It localises to the melanosome. The catalysed reaction is GTP + H2O = GDP + phosphate + H(+). Regulated by guanine nucleotide exchange factors (GEFs) which promote the exchange of bound GDP for free GTP. Regulated by GTPase activating proteins (GAPs) which increase the GTP hydrolysis activity. Inhibited by GDP dissociation inhibitors (GDIs). Functionally, the small GTPases Rab are key regulators of intracellular membrane trafficking, from the formation of transport vesicles to their fusion with membranes. Rabs cycle between an inactive GDP-bound form and an active GTP-bound form that is able to recruit to membranes different sets of downstream effectors directly responsible for vesicle formation, movement, tethering and fusion. RAB1A regulates vesicular protein transport from the endoplasmic reticulum (ER) to the Golgi compartment and on to the cell surface, and plays a role in IL-8 and growth hormone secretion. Required to modulate the compacted morphology of the Golgi. Regulates the level of CASR present at the cell membrane. Plays a role in cell adhesion and cell migration, via its role in protein trafficking. Plays a role in autophagosome assembly and cellular defense reactions against pathogenic bacteria. Plays a role in microtubule-dependent protein transport by early endosomes and in anterograde melanosome transport. The sequence is that of Ras-related protein Rab-1A (RAB1A) from Sus scrofa (Pig).